The chain runs to 406 residues: 5-cytosine rRNA methyltransferase NSUN4 (406 aa).

S-adenosyl-L-methionine contacts are provided by Gly-207, Gly-208, Lys-209, Asp-226, Arg-231, Asp-259, Gly-260, and Asp-277. Cys-332 (nucleophile) is an active-site residue.

Belongs to the class I-like SAM-binding methyltransferase superfamily. RsmB/NOP family.

It localises to the mitochondrion. The enzyme catalyses a cytidine in rRNA + S-adenosyl-L-methionine = a 5-methylcytidine in rRNA + S-adenosyl-L-homocysteine + H(+). The catalysed reaction is a cytidine in mRNA + S-adenosyl-L-methionine = a 5-methylcytidine in mRNA + S-adenosyl-L-homocysteine + H(+). Functionally, involved in mitochondrial ribosome large subunit biogenesis. Its function is as follows. Mitochondrial RNA cytosine C(5)-methyltransferase that methylates cytosine to 5-methylcytosine (m5C) in various RNAs, such as rRNAs, mRNAs and some long non-coding RNAs (lncRNAs). Involved in mitochondrial ribosome small subunit (SSU) maturation by catalyzing methylation of mitochondrial 12S rRNA. This chain is 5-cytosine rRNA methyltransferase NSUN4 (nsun4), found in Xenopus tropicalis (Western clawed frog).